Reading from the N-terminus, the 613-residue chain is MINLTRQRYRVSNLVTGGTSLDVILSHSPNKFTFPPLLKSCAKLGDVVQGRILHAQVVKTGFFVDVFTATALVSMYMKVKQVTDALKVLDEMPERGIASVNAAVSGLLENGFCRDAFRMFGDARVSGSGMNSVTVASVLGGCGDIEGGMQLHCLAMKSGFEMEVYVGTSLVSMYSRCGEWVLAARMFEKVPHKSVVTYNAFISGLMENGVMNLVPSVFNLMRKFSSEEPNDVTFVNAITACASLLNLQYGRQLHGLVMKKEFQFETMVGTALIDMYSKCRCWKSAYIVFTELKDTRNLISWNSVISGMMINGQHETAVELFEKLDSEGLKPDSATWNSLISGFSQLGKVIEAFKFFERMLSVVMVPSLKCLTSLLSACSDIWTLKNGKEIHGHVIKAAAERDIFVLTSLIDMYMKCGLSSWARRIFDRFEPKPKDPVFWNVMISGYGKHGECESAIEIFELLREEKVEPSLATFTAVLSACSHCGNVEKGSQIFRLMQEEYGYKPSTEHIGCMIDLLGRSGRLREAKEVIDQMSEPSSSVYSSLLGSCRQHLDPVLGEEAAMKLAELEPENPAPFVILSSIYAALERWEDVESIRQVIDQKQLVKLPGLSLSG.

15 PPR repeats span residues 30–64 (NKFT…GFFV), 65–99 (DVFT…GIAS), 101–126 (NAAV…ARVS), 128–162 (SGMN…GFEM), 163–193 (EVYV…VPHK), 194–228 (SVVT…SSEE), 230–264 (NDVT…EFQF), 265–295 (ETMV…LKDT), 297–331 (NLIS…GLKP), 332–366 (DSAT…VMVP), 367–401 (SLKC…AAER), 402–432 (DIFV…FEPK), 435–469 (DPVF…KVEP), 470–500 (SLAT…MQEE), and 506–539 (STEH…PSSS). The segment at 540-613 (VYSSLLGSCR…VKLPGLSLSG (74 aa)) is type E motif; degenerate.

This sequence belongs to the PPR family. PCMP-E subfamily.

The chain is Pentatricopeptide repeat-containing protein At2g02750 (PCMP-E22) from Arabidopsis thaliana (Mouse-ear cress).